The chain runs to 242 residues: MRPLSMSGHFLLAPIPESSSDYLLPKDIKLAVLGAGRVGKSAMIVRFLTKRFIGDYEPNTGKLYSRLVYVEGDQLSLQIQDTPGGVQIQDSLPQVVDSLSKCVQWAEGFLLVYSITDYDSYLSIRPLYQHIRKVHPDSKAPVIIVGNKGDLLHARQVQTQDGIQLANELGSLFLEISTSENYEDVCDVFQHLCKEVSKMHGLSGERRRASIIPRPRSPNMQDLKRRFKQALSPKVKAPSALG.

Residues 17 to 241 form a small GTPase-like region; sequence ESSSDYLLPK…SPKVKAPSAL (225 aa). GTP contacts are provided by residues 34-41, 81-85, and 147-150; these read GAGRVGKS, DTPGG, and NKGD.

This sequence belongs to the small GTPase superfamily. Ras family. In terms of assembly, interacts with UBF/UBTF. As to expression, widely expressed. Down-regulated in prostate tumors compared to normal prostate tissue. High levels found in colon tumor and normal colon tissue followed by small intestine, liver, jejunum, ileum, bladder and aorta. Lowest levels observed in endothelial cells.

The protein resides in the nucleus. It localises to the nucleolus. The catalysed reaction is GTP + H2O = GDP + phosphate + H(+). Regulator of rDNA transcription. Acts in cooperation UBF/UBTF and positively regulates RNA polymerase I transcription. This Homo sapiens (Human) protein is Ras-like protein family member 11A.